Reading from the N-terminus, the 93-residue chain is Probable endoribonuclease MazF1 (93 aa).

This sequence belongs to the PemK/MazF family. As to quaternary structure, forms a complex with cognate antitoxin MazE1.

Its function is as follows. Toxic component of a type II toxin-antitoxin (TA) system, its cognate antitoxin is MazE1. Probably an endoribonuclease. In Mycobacterium tuberculosis (strain ATCC 25618 / H37Rv), this protein is Probable endoribonuclease MazF1 (mazF1).